A 197-amino-acid chain; its full sequence is ATP-dependent Clp protease proteolytic subunit 2 (197 aa).

The active-site Nucleophile is S97. The active site involves H122.

This sequence belongs to the peptidase S14 family. As to quaternary structure, fourteen ClpP subunits assemble into 2 heptameric rings which stack back to back to give a disk-like structure with a central cavity, resembling the structure of eukaryotic proteasomes.

The protein localises to the cytoplasm. It carries out the reaction Hydrolysis of proteins to small peptides in the presence of ATP and magnesium. alpha-casein is the usual test substrate. In the absence of ATP, only oligopeptides shorter than five residues are hydrolyzed (such as succinyl-Leu-Tyr-|-NHMec, and Leu-Tyr-Leu-|-Tyr-Trp, in which cleavage of the -Tyr-|-Leu- and -Tyr-|-Trp bonds also occurs).. Cleaves peptides in various proteins in a process that requires ATP hydrolysis. Has a chymotrypsin-like activity. Plays a major role in the degradation of misfolded proteins. This Leptospira interrogans serogroup Icterohaemorrhagiae serovar copenhageni (strain Fiocruz L1-130) protein is ATP-dependent Clp protease proteolytic subunit 2.